A 354-amino-acid chain; its full sequence is C-C chemokine receptor type 5 (354 aa).

At 1–32 (MDFQGSVPTYSYDIDYGMSAPCQKINVKQIAA) the chain is on the extracellular side. O-linked (GalNAc...) serine glycosylation occurs at serine 6. Sulfotyrosine occurs at positions 10, 12, and 16. 2 cysteine pairs are disulfide-bonded: cysteine 22/cysteine 271 and cysteine 103/cysteine 180. A helical membrane pass occupies residues 33 to 60 (QLLPPLYSLVFIFGFVGNMMVFLILISC). Over 61–70 (KKLKSVTDIY) the chain is Cytoplasmic. The helical transmembrane segment at 71–91 (LLNLAISDLLFLLTLPFWAHY) threads the bilayer. The Extracellular portion of the chain corresponds to 92 to 104 (AANEWVFGNIMCK). The chain crosses the membrane as a helical span at residues 105-126 (VFTGLYHIGYFGGIFFIILLTI). At 127–143 (DRYLAIVHAVFALKVRT) the chain is on the cytoplasmic side. A helical membrane pass occupies residues 144-168 (VNFGVITSVVTWAVAVFASLPEIIF). Topologically, residues 169–200 (TRSQKEGFHYTCSPHFPHTQYHFWKSFQTLKM) are extracellular. A helical membrane pass occupies residues 201-220 (VILSLILPLLVMVICYSGIL). Over 221-237 (HTLFRCRNEKKRHRAVR) the chain is Cytoplasmic. Residues 238–262 (LIFAIMIVYFLFWTPYNIVLLLTTF) form a helical membrane-spanning segment. The Extracellular portion of the chain corresponds to 263-279 (QEFFGLNNCSSSNRLDQ). The helical transmembrane segment at 280-303 (AMQATETLGMTHCCLNPVIYAFVG) threads the bilayer. The Cytoplasmic segment spans residues 304-354 (EKFRSYLSVFFRKHMVKRFCKRCSIFQQDNPDRASSVYTRSTGEHEVSTGL). S-palmitoyl cysteine attachment occurs at residues cysteine 323 and cysteine 326. 4 positions are modified to phosphoserine; by BARK1: serine 338, serine 339, serine 344, and serine 351.

This sequence belongs to the G-protein coupled receptor 1 family. Interacts with PRAF2. Efficient ligand binding to CCL3/MIP-1alpha and CCL4/MIP-1beta requires sulfation, O-glycosylation and sialic acid modifications. Glycosylation on Ser-6 is required for efficient binding of CCL4. Interacts with GRK2. Interacts with ARRB1 and ARRB2. Interacts with CNIH4. Interacts with S100A4; this interaction stimulates T-lymphocyte chemotaxis. Post-translationally, sulfated on at least 2 of the N-terminal tyrosines. Sulfation is required for efficient binding of the chemokines, CCL3 and CCL4. O-glycosylated, but not N-glycosylated. Ser-6 appears to be the major site. Also sialylated glycans present which contribute to chemokine binding. In terms of processing, palmitoylation in the C-terminal is important for cell surface expression. Post-translationally, phosphorylation on serine residues in the C-terminal is stimulated by binding CC chemokines especially by APO-RANTES.

It localises to the cell membrane. In terms of biological role, receptor for a number of inflammatory CC-chemokines including CCL3/MIP-1-alpha, CCL4/MIP-1-beta and RANTES and subsequently transduces a signal by increasing the intracellular calcium ion level. May play a role in the control of granulocytic lineage proliferation or differentiation. Participates in T-lymphocyte migration to the infection site by acting as a chemotactic receptor. The protein is C-C chemokine receptor type 5 (Ccr5) of Mus musculus (Mouse).